The chain runs to 102 residues: Parathymosin (102 aa).

The interval 1-102 is disordered; it reads MSEKSVEAAA…RQKTENGASA (102 aa). S2 is subject to N-acetylserine. The residue at position 2 (S2) is a Phosphoserine. K4 carries the post-translational modification N6-acetyllysine. Residues S5 and S13 each carry the phosphoserine modification. The span at 13-37 shows a compositional bias: basic and acidic residues; that stretch reads SAKDLKEKKEKVEEKASRKERKKEV. Position 15 is an N6-acetyllysine (K15). Residues 38-76 show a composition bias toward acidic residues; sequence VEEEENGAEEEEEETAEDGEEEDEGEEEDEEEEEEDDEG. At T52 the chain carries Phosphothreonine. Position 92 is an N6-acetyllysine (K92).

This sequence belongs to the pro/parathymosin family.

Functionally, parathymosin may mediate immune function by blocking the effect of prothymosin alpha which confers resistance to certain opportunistic infections. The protein is Parathymosin (PTMS) of Homo sapiens (Human).